Here is a 1391-residue protein sequence, read N- to C-terminus: DNA-directed RNA polymerase subunit beta' (1391 aa).

Residues C72, C74, C87, and C90 each coordinate Zn(2+). Residues D462, D464, and D466 each contribute to the Mg(2+) site. The Zn(2+) site is built by C816, C890, C897, and C900.

The protein belongs to the RNA polymerase beta' chain family. In terms of assembly, the RNAP catalytic core consists of 2 alpha, 1 beta, 1 beta' and 1 omega subunit. When a sigma factor is associated with the core the holoenzyme is formed, which can initiate transcription. Requires Mg(2+) as cofactor. It depends on Zn(2+) as a cofactor.

It catalyses the reaction RNA(n) + a ribonucleoside 5'-triphosphate = RNA(n+1) + diphosphate. Its function is as follows. DNA-dependent RNA polymerase catalyzes the transcription of DNA into RNA using the four ribonucleoside triphosphates as substrates. The protein is DNA-directed RNA polymerase subunit beta' of Neisseria gonorrhoeae (strain ATCC 700825 / FA 1090).